The sequence spans 95 residues: Protein K6 (95 aa).

A signal peptide spans 1–24; it reads MAPVHVLCCVSVLLATFYLTPTES.

This Human herpesvirus 8 type P (isolate GK18) (HHV-8) protein is Protein K6 (K6).